The following is a 222-amino-acid chain: Putative auxin response factor 23 (222 aa).

Residues 126 to 222 (FTKVLTASDT…ETGELRVGIR (97 aa)) constitute a DNA-binding region (TF-B3).

Belongs to the ARF family. Homo and heterodimers.

Its subcellular location is the nucleus. Its function is as follows. Auxin response factors (ARFs) are transcriptional factors that binds specifically to the DNA sequence 5'-TGTCTC-3' found in the auxin-responsive promoter elements (AuxREs). Could act as transcriptional activator or repressor. Formation of heterodimers with Aux/IAA proteins may alter their ability to modulate early auxin response genes expression. This chain is Putative auxin response factor 23 (ARF23), found in Arabidopsis thaliana (Mouse-ear cress).